The following is a 248-amino-acid chain: Ribonuclease PH (248 aa).

Phosphate is bound by residues arginine 86 and 124–126; that span reads GTR.

The protein belongs to the RNase PH family. As to quaternary structure, homohexameric ring arranged as a trimer of dimers.

The enzyme catalyses tRNA(n+1) + phosphate = tRNA(n) + a ribonucleoside 5'-diphosphate. Its function is as follows. Phosphorolytic 3'-5' exoribonuclease that plays an important role in tRNA 3'-end maturation. Removes nucleotide residues following the 3'-CCA terminus of tRNAs; can also add nucleotides to the ends of RNA molecules by using nucleoside diphosphates as substrates, but this may not be physiologically important. Probably plays a role in initiation of 16S rRNA degradation (leading to ribosome degradation) during starvation. This is Ribonuclease PH from Clostridium kluyveri (strain NBRC 12016).